Here is a 264-residue protein sequence, read N- to C-terminus: Thiazole synthase (264 aa).

The active-site Schiff-base intermediate with DXP is lysine 106. Residues glycine 167, 193–194, and 215–216 contribute to the 1-deoxy-D-xylulose 5-phosphate site; these read AG and NS.

The protein belongs to the ThiG family. In terms of assembly, homotetramer. Forms heterodimers with either ThiH or ThiS.

It localises to the cytoplasm. The enzyme catalyses [ThiS sulfur-carrier protein]-C-terminal-Gly-aminoethanethioate + 2-iminoacetate + 1-deoxy-D-xylulose 5-phosphate = [ThiS sulfur-carrier protein]-C-terminal Gly-Gly + 2-[(2R,5Z)-2-carboxy-4-methylthiazol-5(2H)-ylidene]ethyl phosphate + 2 H2O + H(+). Its pathway is cofactor biosynthesis; thiamine diphosphate biosynthesis. In terms of biological role, catalyzes the rearrangement of 1-deoxy-D-xylulose 5-phosphate (DXP) to produce the thiazole phosphate moiety of thiamine. Sulfur is provided by the thiocarboxylate moiety of the carrier protein ThiS. In vitro, sulfur can be provided by H(2)S. The sequence is that of Thiazole synthase from Pseudomonas fluorescens (strain Pf0-1).